A 533-amino-acid chain; its full sequence is Berberine bridge enzyme-like 28 (533 aa).

The N-terminal stretch at 1–23 is a signal peptide; that stretch reads MEFSSFLFTILLFSLNISPLVSA. Residues Cys34 and Cys96 are joined by a disulfide bond. The FAD-binding PCMH-type domain maps to 74–249; the sequence is ETPKPVSIIT…LSWKVKLVDV (176 aa). At His111 the chain carries Pros-8alpha-FAD histidine. 2 N-linked (GlcNAc...) asparagine glycosylation sites follow: Asn142 and Asn440.

It belongs to the oxygen-dependent FAD-linked oxidoreductase family. Requires FAD as cofactor.

It localises to the secreted. It is found in the cell wall. Functionally, involved in adaptation to salt stress. This chain is Berberine bridge enzyme-like 28, found in Arabidopsis thaliana (Mouse-ear cress).